The chain runs to 382 residues: Lipid-A-disaccharide synthase (382 aa).

This sequence belongs to the LpxB family.

It catalyses the reaction 2-N,3-O-bis[(3R)-3-hydroxytetradecanoyl]-alpha-D-glucosaminyl 1-phosphate + UDP-2-N,3-O-bis[(3R)-3-hydroxytetradecanoyl]-alpha-D-glucosamine = lipid A disaccharide (E. coli) + UDP + H(+). It carries out the reaction a lipid X + a UDP-2-N,3-O-bis[(3R)-3-hydroxyacyl]-alpha-D-glucosamine = a lipid A disaccharide + UDP + H(+). It participates in glycolipid biosynthesis; lipid IV(A) biosynthesis; lipid IV(A) from (3R)-3-hydroxytetradecanoyl-[acyl-carrier-protein] and UDP-N-acetyl-alpha-D-glucosamine: step 5/6. In terms of biological role, condensation of UDP-2,3-diacylglucosamine and 2,3-diacylglucosamine-1-phosphate to form lipid A disaccharide, a precursor of lipid A, a phosphorylated glycolipid that anchors the lipopolysaccharide to the outer membrane of the cell. The polypeptide is Lipid-A-disaccharide synthase (Salmonella paratyphi B (strain ATCC BAA-1250 / SPB7)).